Here is a 162-residue protein sequence, read N- to C-terminus: Disulfide bond formation protein B (162 aa).

Topologically, residues 1–4 (MRII) are cytoplasmic. A helical membrane pass occupies residues 5–21 (FLLIFLACAGLIGYALY). At 22 to 39 (LQLMDGLLPCPLCIFQRI) the chain is on the periplasmic side. Cysteine 31 and cysteine 34 are disulfide-bonded. Residues 40 to 56 (AYWLIGITALFTFIHNP) traverse the membrane as a helical segment. Residues 57–62 (QSLGQH) lie on the Cytoplasmic side of the membrane. Residues 63–80 (IYYGLIILFSLAGAIVAG) form a helical membrane-spanning segment. The Periplasmic portion of the chain corresponds to 81–136 (RQAWLIRFPEAFECGISPEEAFLNGLPLAQWWPNMFEANGDCNDGTWQFLSLTLPD). A disulfide bond links cysteine 94 and cysteine 122. A helical transmembrane segment spans residues 137-155 (WSLLIFAAFGIIAGLLWHK). At 156 to 162 (KYNSINQ) the chain is on the cytoplasmic side.

This sequence belongs to the DsbB family.

The protein localises to the cell inner membrane. Functionally, required for disulfide bond formation in some periplasmic proteins. Acts by oxidizing the DsbA protein. In Nitrosomonas eutropha (strain DSM 101675 / C91 / Nm57), this protein is Disulfide bond formation protein B.